We begin with the raw amino-acid sequence, 139 residues long: FAD synthase (139 aa).

ATP-binding positions include 9–10 (TF), 14–17 (HPGH), and Asn-92.

This sequence belongs to the archaeal FAD synthase family. Homodimer. A divalent metal cation serves as cofactor.

It carries out the reaction FMN + ATP + H(+) = FAD + diphosphate. It participates in cofactor biosynthesis; FAD biosynthesis; FAD from FMN: step 1/1. Functionally, catalyzes the transfer of the AMP portion of ATP to flavin mononucleotide (FMN) to produce flavin adenine dinucleotide (FAD) coenzyme. This is FAD synthase from Methanocella paludicola (strain DSM 17711 / JCM 13418 / NBRC 101707 / SANAE).